The chain runs to 250 residues: Small ribosomal subunit protein uS2 (250 aa).

The disordered stretch occupies residues 225-250; sequence GAQGGRQARGEDLGAAVEAPSEDALA.

Belongs to the universal ribosomal protein uS2 family.

The sequence is that of Small ribosomal subunit protein uS2 from Rhizorhabdus wittichii (strain DSM 6014 / CCUG 31198 / JCM 15750 / NBRC 105917 / EY 4224 / RW1) (Sphingomonas wittichii).